A 296-amino-acid polypeptide reads, in one-letter code: Polyamine aminopropyltransferase (296 aa).

The PABS domain maps to 16–251 (HLWYFEYYTG…GMWSYTFASK (236 aa)). Glutamine 46 lines the S-methyl-5'-thioadenosine pocket. Spermidine is bound by residues histidine 77 and aspartate 101. S-methyl-5'-thioadenosine-binding positions include glutamate 121 and 152-153 (NG). Aspartate 170 (proton acceptor) is an active-site residue. A spermidine-binding site is contributed by 170-173 (DSTD).

The protein belongs to the spermidine/spermine synthase family. In terms of assembly, homotetramer.

The protein localises to the cytoplasm. The enzyme catalyses S-adenosyl 3-(methylsulfanyl)propylamine + putrescine = S-methyl-5'-thioadenosine + spermidine + H(+). Its pathway is amine and polyamine biosynthesis; spermidine biosynthesis; spermidine from putrescine: step 1/1. With respect to regulation, strongly inhibited by S-adenosyl-1,8-diamino-3-thiooctane. Catalyzes the irreversible transfer of a propylamine group from the amino donor S-adenosylmethioninamine (decarboxy-AdoMet) to putrescine (1,4-diaminobutane) to yield spermidine. It has lower affinity and lower activity towards 1,3-diaminopropane, cadaverine (1,5-diaminopentane), agmatine, norspermidine and spermidine (in vitro). This is Polyamine aminopropyltransferase from Thermotoga maritima (strain ATCC 43589 / DSM 3109 / JCM 10099 / NBRC 100826 / MSB8).